Here is a 336-residue protein sequence, read N- to C-terminus: Glucokinase (336 aa).

12 to 17 provides a ligand contact to ATP; the sequence is ADIGGT.

It belongs to the bacterial glucokinase family.

The protein localises to the cytoplasm. The catalysed reaction is D-glucose + ATP = D-glucose 6-phosphate + ADP + H(+). This Helicobacter acinonychis (strain Sheeba) protein is Glucokinase.